A 336-amino-acid chain; its full sequence is 3-isopropylmalate dehydrogenase (336 aa).

Substrate is bound by residues arginine 87, arginine 97, arginine 121, and aspartate 211. Residues aspartate 211, aspartate 235, and aspartate 239 each contribute to the Mg(2+) site. 271-283 contributes to the NAD(+) binding site; the sequence is GSAPDIAGQGIAD.

This sequence belongs to the isocitrate and isopropylmalate dehydrogenases family. LeuB type 2 subfamily. Homodimer. The cofactor is Mg(2+). Mn(2+) is required as a cofactor.

It localises to the cytoplasm. The catalysed reaction is (2R,3S)-3-isopropylmalate + NAD(+) = 4-methyl-2-oxopentanoate + CO2 + NADH. The protein operates within amino-acid biosynthesis; L-leucine biosynthesis; L-leucine from 3-methyl-2-oxobutanoate: step 3/4. Catalyzes the oxidation of 3-carboxy-2-hydroxy-4-methylpentanoate (3-isopropylmalate) to 3-carboxy-4-methyl-2-oxopentanoate. The product decarboxylates to 4-methyl-2 oxopentanoate. This Mycolicibacterium vanbaalenii (strain DSM 7251 / JCM 13017 / BCRC 16820 / KCTC 9966 / NRRL B-24157 / PYR-1) (Mycobacterium vanbaalenii) protein is 3-isopropylmalate dehydrogenase.